The sequence spans 480 residues: Vacuolar protein sorting-associated protein 9A (480 aa).

One can recognise a VPS9 domain in the interval 111–255; that stretch reads VKSDEELFEK…IWNIDGESLS (145 aa). 2 residues coordinate GTP: Asn-189 and Asp-194. Residues 276 to 288 are compositionally biased toward polar residues; sequence SASSENQDNQNNL. Disordered stretches follow at residues 276–338 and 418–480; these read SASS…VQSI and ESEE…PEHA. Residues 289–305 show a composition bias toward basic and acidic residues; sequence DVREQKSQTLKASRDSD. 3 stretches are compositionally biased toward polar residues: residues 327–338, 427–437, and 451–461; these read ASSNPVERVQSI, NAVNFSEGSSK, and VDNTGTQQTAV.

Interacts with RAB5A. Interacts with GPA3 (via C-terminus).

It is found in the cytoplasm. It localises to the golgi apparatus. The protein resides in the trans-Golgi network. The protein localises to the prevacuolar compartment. Its function is as follows. Functions as a guanine nucleotide exchange factor (GEF) for Rab small GTPases. Activates specifically RAB5A protein. Functions cooperatively with RAB5A to regulate post-Golgi dense vesicle-mediated transport of storage proteins to the type II protein bodies (PBII) protein storage vacuoles in developing endosperm. The sequence is that of Vacuolar protein sorting-associated protein 9A from Oryza sativa subsp. japonica (Rice).